The chain runs to 253 residues: Imidazole glycerol phosphate synthase subunit HisF (253 aa).

Residues Asp-11 and Asp-130 contribute to the active site.

The protein belongs to the HisA/HisF family. Heterodimer of HisH and HisF.

It localises to the cytoplasm. It carries out the reaction 5-[(5-phospho-1-deoxy-D-ribulos-1-ylimino)methylamino]-1-(5-phospho-beta-D-ribosyl)imidazole-4-carboxamide + L-glutamine = D-erythro-1-(imidazol-4-yl)glycerol 3-phosphate + 5-amino-1-(5-phospho-beta-D-ribosyl)imidazole-4-carboxamide + L-glutamate + H(+). Its pathway is amino-acid biosynthesis; L-histidine biosynthesis; L-histidine from 5-phospho-alpha-D-ribose 1-diphosphate: step 5/9. IGPS catalyzes the conversion of PRFAR and glutamine to IGP, AICAR and glutamate. The HisF subunit catalyzes the cyclization activity that produces IGP and AICAR from PRFAR using the ammonia provided by the HisH subunit. This chain is Imidazole glycerol phosphate synthase subunit HisF, found in Gluconobacter oxydans (strain 621H) (Gluconobacter suboxydans).